The chain runs to 361 residues: tRNA-specific 2-thiouridylase MnmA (361 aa).

Residues 11 to 18 (GMSGGVDS) and Met37 contribute to the ATP site. The segment at 97–99 (NPD) is interaction with target base in tRNA. Cys102 serves as the catalytic Nucleophile. Cys102 and Cys199 form a disulfide bridge. Gly126 provides a ligand contact to ATP. An interaction with tRNA region spans residues 149 to 151 (KDQ). Catalysis depends on Cys199, which acts as the Cysteine persulfide intermediate. The segment at 311 to 312 (RY) is interaction with tRNA.

Belongs to the MnmA/TRMU family.

Its subcellular location is the cytoplasm. The enzyme catalyses S-sulfanyl-L-cysteinyl-[protein] + uridine(34) in tRNA + AH2 + ATP = 2-thiouridine(34) in tRNA + L-cysteinyl-[protein] + A + AMP + diphosphate + H(+). In terms of biological role, catalyzes the 2-thiolation of uridine at the wobble position (U34) of tRNA, leading to the formation of s(2)U34. The polypeptide is tRNA-specific 2-thiouridylase MnmA (Cupriavidus taiwanensis (strain DSM 17343 / BCRC 17206 / CCUG 44338 / CIP 107171 / LMG 19424 / R1) (Ralstonia taiwanensis (strain LMG 19424))).